Consider the following 329-residue polypeptide: 4-hydroxythreonine-4-phosphate dehydrogenase (329 aa).

Residues His136 and Thr137 each contribute to the substrate site. The a divalent metal cation site is built by His166, His211, and His266. Residues Lys274, Asn283, and Arg292 each contribute to the substrate site.

The protein belongs to the PdxA family. Homodimer. Requires Zn(2+) as cofactor. It depends on Mg(2+) as a cofactor. Co(2+) is required as a cofactor.

It is found in the cytoplasm. It catalyses the reaction 4-(phosphooxy)-L-threonine + NAD(+) = 3-amino-2-oxopropyl phosphate + CO2 + NADH. It participates in cofactor biosynthesis; pyridoxine 5'-phosphate biosynthesis; pyridoxine 5'-phosphate from D-erythrose 4-phosphate: step 4/5. Functionally, catalyzes the NAD(P)-dependent oxidation of 4-(phosphooxy)-L-threonine (HTP) into 2-amino-3-oxo-4-(phosphooxy)butyric acid which spontaneously decarboxylates to form 3-amino-2-oxopropyl phosphate (AHAP). The chain is 4-hydroxythreonine-4-phosphate dehydrogenase from Escherichia coli O7:K1 (strain IAI39 / ExPEC).